A 478-amino-acid polypeptide reads, in one-letter code: ATP synthase subunit beta (478 aa).

Residue 160 to 167 (GGAGVGKT) coordinates ATP.

This sequence belongs to the ATPase alpha/beta chains family. F-type ATPases have 2 components, CF(1) - the catalytic core - and CF(0) - the membrane proton channel. CF(1) has five subunits: alpha(3), beta(3), gamma(1), delta(1), epsilon(1). CF(0) has three main subunits: a(1), b(2) and c(9-12). The alpha and beta chains form an alternating ring which encloses part of the gamma chain. CF(1) is attached to CF(0) by a central stalk formed by the gamma and epsilon chains, while a peripheral stalk is formed by the delta and b chains.

The protein localises to the cell inner membrane. The enzyme catalyses ATP + H2O + 4 H(+)(in) = ADP + phosphate + 5 H(+)(out). Its function is as follows. Produces ATP from ADP in the presence of a proton gradient across the membrane. The catalytic sites are hosted primarily by the beta subunits. In Orientia tsutsugamushi (strain Boryong) (Rickettsia tsutsugamushi), this protein is ATP synthase subunit beta.